Consider the following 176-residue polypeptide: Jacalin-related lectin 19 (176 aa).

The 143-residue stretch at threonine 12–arginine 154 folds into the Jacalin-type lectin domain.

It belongs to the jacalin lectin family.

In Arabidopsis thaliana (Mouse-ear cress), this protein is Jacalin-related lectin 19 (JAL19).